We begin with the raw amino-acid sequence, 461 residues long: Epidermin leader peptide-processing serine protease EpiP (461 aa).

The first 23 residues, 1 to 23, serve as a signal peptide directing secretion; it reads MNKFKFFIVFLILSLVFLQNEYA. The Peptidase S8 domain occupies 121–459; the sequence is QWDMRKITNE…NGKLDVYKLL (339 aa). Residues Asp-149, His-194, and Ser-402 each act as charge relay system in the active site.

The protein belongs to the peptidase S8 family.

It functions in the pathway antibiotic biosynthesis; epidermin biosynthesis. Functionally, protease which cleaves the matured lantibiotic from the modified prepeptide. The polypeptide is Epidermin leader peptide-processing serine protease EpiP (epiP) (Staphylococcus epidermidis).